We begin with the raw amino-acid sequence, 77 residues long: Large ribosomal subunit protein uL24c (77 aa).

It belongs to the universal ribosomal protein uL24 family. Part of the 50S ribosomal subunit.

It is found in the plastid. The protein resides in the chloroplast. One of two assembly initiator proteins, it binds directly to the 5'-end of the 23S rRNA, where it nucleates assembly of the 50S subunit. The sequence is that of Large ribosomal subunit protein uL24c (rpl24) from Trieres chinensis (Marine centric diatom).